A 457-amino-acid chain; its full sequence is Methylenetetrahydrofolate--tRNA-(uracil-5-)-methyltransferase TrmFO (457 aa).

7–12 (GAGLAG) lines the FAD pocket. Residues 38-58 (FTSRQDEKTGTHDVRNATQTR) are disordered. Basic and acidic residues predominate over residues 40 to 52 (SRQDEKTGTHDVR).

Belongs to the MnmG family. TrmFO subfamily. FAD is required as a cofactor.

The protein localises to the cytoplasm. The catalysed reaction is uridine(54) in tRNA + (6R)-5,10-methylene-5,6,7,8-tetrahydrofolate + NADH + H(+) = 5-methyluridine(54) in tRNA + (6S)-5,6,7,8-tetrahydrofolate + NAD(+). The enzyme catalyses uridine(54) in tRNA + (6R)-5,10-methylene-5,6,7,8-tetrahydrofolate + NADPH + H(+) = 5-methyluridine(54) in tRNA + (6S)-5,6,7,8-tetrahydrofolate + NADP(+). Functionally, catalyzes the folate-dependent formation of 5-methyl-uridine at position 54 (M-5-U54) in all tRNAs. In Hydrogenobaculum sp. (strain Y04AAS1), this protein is Methylenetetrahydrofolate--tRNA-(uracil-5-)-methyltransferase TrmFO.